We begin with the raw amino-acid sequence, 309 residues long: Porphobilinogen deaminase (309 aa).

The residue at position 242 (C242) is an S-(dipyrrolylmethanemethyl)cysteine.

Belongs to the HMBS family. In terms of assembly, monomer. The cofactor is dipyrromethane.

The catalysed reaction is 4 porphobilinogen + H2O = hydroxymethylbilane + 4 NH4(+). The protein operates within porphyrin-containing compound metabolism; protoporphyrin-IX biosynthesis; coproporphyrinogen-III from 5-aminolevulinate: step 2/4. In terms of biological role, tetrapolymerization of the monopyrrole PBG into the hydroxymethylbilane pre-uroporphyrinogen in several discrete steps. This Hamiltonella defensa subsp. Acyrthosiphon pisum (strain 5AT) protein is Porphobilinogen deaminase.